The chain runs to 473 residues: Serine palmitoyltransferase 1 (473 aa).

Residues 1–15 lie on the Lumenal side of the membrane; that stretch reads MATVAEQWVLVEMVQ. The tract at residues 1–66 is interaction with SPTLC2; that stretch reads MATVAEQWVL…KEELIEEWQP (66 aa). Residues 16–36 traverse the membrane as a helical segment; sequence ALYEAPAYHLILEGILILWII. Residues 37–473 lie on the Cytoplasmic side of the membrane; sequence RLLFSKTYKL…ISEVAQTVLL (437 aa). Phosphotyrosine; by ABL is present on Tyr164.

The protein belongs to the class-II pyridoxal-phosphate-dependent aminotransferase family. In terms of assembly, component of the serine palmitoyltransferase (SPT) complex, which is also composed of SPTLC2 or SPTLC3 and SPTSSA or SPTSSB. The heterodimer with SPTLC2 or SPTLC3 forms the catalytic core of the enzyme, while SPTSSA or SPTSSB subunits determine substrate specificity. SPT also interacts with ORMDL proteins, especially ORMDL3, which negatively regulate SPT activity in the presence of ceramides. Forms dimers of heterodimers with SPTLC2. Interacts with RTN4. Pyridoxal 5'-phosphate is required as a cofactor. In terms of processing, phosphorylation at Tyr-164 inhibits activity and promotes cell survival.

It localises to the endoplasmic reticulum membrane. The enzyme catalyses L-serine + hexadecanoyl-CoA + H(+) = 3-oxosphinganine + CO2 + CoA. It catalyses the reaction octadecanoyl-CoA + L-serine + H(+) = 3-oxoeicosasphinganine + CO2 + CoA. The catalysed reaction is tetradecanoyl-CoA + L-serine + H(+) = 3-oxohexadecasphinganine + CO2 + CoA. It carries out the reaction dodecanoyl-CoA + L-serine + H(+) = 3-oxotetradecasphinganine + CO2 + CoA. It participates in lipid metabolism; sphingolipid metabolism. SPT complex catalytic activity is negatively regulated by ORMDL proteins, including ORMDL3, in the presence of ceramides. This mechanism allows to maintain ceramide levels at sufficient concentrations for the production of complex sphingolipids, but which prevents the accumulation of ceramides to levels that trigger apoptosis. Its function is as follows. Component of the serine palmitoyltransferase multisubunit enzyme (SPT) that catalyzes the initial and rate-limiting step in sphingolipid biosynthesis by condensing L-serine and activated acyl-CoA (most commonly palmitoyl-CoA) to form long-chain bases. The SPT complex is also composed of SPTLC2 or SPTLC3 and SPTSSA or SPTSSB. Within this complex, the heterodimer with SPTLC2 or SPTLC3 forms the catalytic core. The composition of the serine palmitoyltransferase (SPT) complex determines the substrate preference. The SPTLC1-SPTLC2-SPTSSA complex shows a strong preference for C16-CoA substrate, while the SPTLC1-SPTLC3-SPTSSA isozyme uses both C14-CoA and C16-CoA as substrates, with a slight preference for C14-CoA. The SPTLC1-SPTLC2-SPTSSB complex shows a strong preference for C18-CoA substrate, while the SPTLC1-SPTLC3-SPTSSB isozyme displays an ability to use a broader range of acyl-CoAs, without apparent preference. Required for adipocyte cell viability and metabolic homeostasis. This chain is Serine palmitoyltransferase 1 (SPTLC1), found in Bos taurus (Bovine).